The primary structure comprises 705 residues: GATOR2 complex protein WDR24 (705 aa).

WD repeat units lie at residues 1-28 (MDENLLATAATNGVVVTWNLGKPSRNKQ), 34-74 (EHKR…SVST), 77-117 (GQSE…RYER), 121-161 (AHNG…AKEI), 165-207 (QTIA…IPSA), and 211-254 (EHKD…IDRA). Residues 633 to 655 (NCSNCKRPMSNRGWICDRCRQCA) form a C4-type zinc finger. Residues C634, C637, C648, C651, C658, C661, C672, C675, H677, H680, H683, C694, C698, H700, and C702 each coordinate Zn(2+). The segment at 656 to 705 (SMCAVCHHVVKGLFVWCQGCSHGGHLQHIMKWLETSSHCPAGCGHLCEYT) adopts an RING-type; atypical zinc-finger fold.

The protein belongs to the WD repeat WDR24 family. In terms of assembly, component of the GATOR2 subcomplex, composed of MIOS, SEC13, SEH1L, WDR24 and WDR59. The GATOR2 complex interacts with CASTOR1 and CASTOR2; the interaction is negatively regulated by arginine. The GATOR2 complex interacts with SESN1, SESN2 and SESN3; the interaction is negatively regulated by amino acids.

It is found in the lysosome membrane. The enzyme catalyses S-ubiquitinyl-[E2 ubiquitin-conjugating enzyme]-L-cysteine + [acceptor protein]-L-lysine = [E2 ubiquitin-conjugating enzyme]-L-cysteine + N(6)-ubiquitinyl-[acceptor protein]-L-lysine.. It functions in the pathway protein modification; protein ubiquitination. Its activity is regulated as follows. The GATOR2 complex is negatively regulated by the upstream amino acid sensors CASTOR1 and SESN2, which sequester the GATOR2 complex in absence of amino acids. In the presence of abundant amino acids, GATOR2 is released from CASTOR1 and SESN2 and activated. Functionally, catalytic component of the GATOR2 complex, a multiprotein complex that acts as an activator of the amino acid-sensing branch of the mTORC1 signaling pathway. The GATOR2 complex indirectly activates mTORC1 through the inhibition of the GATOR1 subcomplex. GATOR2 probably acts as an E3 ubiquitin-protein ligase toward GATOR1. In the presence of abundant amino acids, the GATOR2 complex mediates ubiquitination of the NPRL2 core component of the GATOR1 complex, leading to GATOR1 inactivation. In the absence of amino acids, GATOR2 is inhibited, activating the GATOR1 complex. In addition to its role in regulation of the mTORC1 complex, promotes the acidification of lysosomes and facilitates autophagic flux. Within the GATOR2 complex, WDR24 constitutes the catalytic subunit that mediates 'Lys-6'-linked ubiquitination of NPRL2. This is GATOR2 complex protein WDR24 from Gallus gallus (Chicken).